The following is a 239-amino-acid chain: THAP domain-containing protein 3 (239 aa).

The THAP-type zinc-finger motif lies at 1–82; it reads MPKSCAARQC…LKHNAVPTVF (82 aa). The interval 84–177 is disordered; it reads FQDPTQQVRE…RRTPNKQPSD (94 aa). Residue serine 122 is modified to Phosphoserine. The HCFC1-binding motif (HBM) motif lies at 177 to 180; sequence DHSY.

In terms of assembly, component of a THAP1/THAP3-HCFC1-OGT complex that contains at least, either THAP1 or THAP3, HCFC1 and OGT. Interacts directly with OGT and HCFC1 (via its HBM). As to expression, highly expressed in heart, skeletal muscle and placenta. Weaker expression in brain, kidney and liver.

Component of a THAP1/THAP3-HCFC1-OGT complex that is required for the regulation of the transcriptional activity of RRM1. The protein is THAP domain-containing protein 3 (THAP3) of Homo sapiens (Human).